The chain runs to 144 residues: Na(+)/H(+) antiporter subunit B (144 aa).

4 consecutive transmembrane segments (helical) span residues 9–31 (VLLHTLTRVVTFIILAFSVYLFF), 41–58 (FIGGLMTASALLLMYLGF), 75–97 (IAFGLLIAIFTGFGGLLVGDPYL), and 117–139 (ALPFDLGIYLVVIGIALTIILTI).

The protein belongs to the CPA3 antiporters (TC 2.A.63) subunit B family. Forms a heterooligomeric complex that consists of seven subunits: MrpA, MrpB, MrpC, MrpD, MrpE, MrpF and MrpG.

Its subcellular location is the cell membrane. In terms of biological role, mnh complex is a Na(+)Li(+)/H(+) antiporter involved in Na(+) and/or Li(+) excretion and Na(+) resistance. Na(+)/H(+) antiport consumes a transmembrane electrical potential, and is thus inferred to be electrogenic. Does not transport K(+), Ca(2+) or Mg(2+). The polypeptide is Na(+)/H(+) antiporter subunit B (mrpB) (Alkalihalophilus pseudofirmus (strain ATCC BAA-2126 / JCM 17055 / OF4) (Bacillus pseudofirmus)).